Consider the following 315-residue polypeptide: DNA-directed RNA polymerase subunit alpha (315 aa).

The segment at 1 to 228 (MLEIEKPKIE…EHFKLFMTLT (228 aa)) is alpha N-terminal domain (alpha-NTD). An alpha C-terminal domain (alpha-CTD) region spans residues 245–315 (KEKVLEMTIE…LGLSLKLNDE (71 aa)).

It belongs to the RNA polymerase alpha chain family. In terms of assembly, homodimer. The RNAP catalytic core consists of 2 alpha, 1 beta, 1 beta' and 1 omega subunit. When a sigma factor is associated with the core the holoenzyme is formed, which can initiate transcription.

It carries out the reaction RNA(n) + a ribonucleoside 5'-triphosphate = RNA(n+1) + diphosphate. Its function is as follows. DNA-dependent RNA polymerase catalyzes the transcription of DNA into RNA using the four ribonucleoside triphosphates as substrates. This is DNA-directed RNA polymerase subunit alpha from Clostridium acetobutylicum (strain ATCC 824 / DSM 792 / JCM 1419 / IAM 19013 / LMG 5710 / NBRC 13948 / NRRL B-527 / VKM B-1787 / 2291 / W).